Consider the following 354-residue polypeptide: Cellular communication network factor 6 (354 aa).

The signal sequence occupies residues 1 to 23 (MRRLLFCTLLMTGLTQLCCRTQG). The region spanning 44 to 117 (RTEVCRWPCR…RYETGVCAYL (74 aa)) is the IGFBP N-terminal domain. 13 cysteine pairs are disulfide-bonded: Cys-48/Cys-72, Cys-52/Cys-74, Cys-54/Cys-75, Cys-61/Cys-78, Cys-86/Cys-100, Cys-92/Cys-114, Cys-209/Cys-238, Cys-219/Cys-223, Cys-247/Cys-252, Cys-268/Cys-305, Cys-285/Cys-319, Cys-296/Cys-335, and Cys-299/Cys-337. Positions 208-253 (KCLVQATKWTPCSRTCGMGISNRVTNDNANCEMRKERRLCYIQPCS) constitute a TSP type-1 domain. One can recognise a CTCK domain in the interval 268–342 (CQPTFQLPKA…TSCVCQRDCR (75 aa)). Asn-308 carries N-linked (GlcNAc...) asparagine glycosylation.

This sequence belongs to the CCN family.

It localises to the secreted. The protein resides in the mitochondrion. Plays a role in mitochondrial electron transport and mitochondrial respiration. The chain is Cellular communication network factor 6 from Mus musculus (Mouse).